We begin with the raw amino-acid sequence, 617 residues long: Probable LRR receptor-like serine/threonine-protein kinase RKF3 (617 aa).

The first 20 residues, 1–20 (MLFLRRIAVVFFVFTSFSAA), serve as a signal peptide directing secretion. Residues 21 to 212 (QNSTCPLDFS…PTSSGANKVK (192 aa)) are Extracellular-facing. 4 N-linked (GlcNAc...) asparagine glycosylation sites follow: asparagine 22, asparagine 124, asparagine 135, and asparagine 165. A helical membrane pass occupies residues 213–233 (VLVSSFSVLLVASVLVITAWF). Over 234–617 (WYCRRKKSKL…DGPSGNTNTT (384 aa)) the chain is Cytoplasmic. Residues 283–563 (FSRHNIIGRG…VKMLESNEFT (281 aa)) enclose the Protein kinase domain. ATP is bound by residues 289–297 (IGRGGYGNV) and lysine 311. The active-site Proton acceptor is the aspartate 412. The disordered stretch occupies residues 585 to 617 (VSSSSGSGKLTSPTGYQAFSFGGDGPSGNTNTT).

It belongs to the protein kinase superfamily. Ser/Thr protein kinase family. In terms of tissue distribution, expressed in the whole plant at low levels.

Its subcellular location is the cell membrane. It catalyses the reaction L-seryl-[protein] + ATP = O-phospho-L-seryl-[protein] + ADP + H(+). It carries out the reaction L-threonyl-[protein] + ATP = O-phospho-L-threonyl-[protein] + ADP + H(+). The protein is Probable LRR receptor-like serine/threonine-protein kinase RKF3 (RKF3) of Arabidopsis thaliana (Mouse-ear cress).